Consider the following 74-residue polypeptide: Acyl carrier protein (74 aa).

Positions 1-73 constitute a Carrier domain; the sequence is MAVFEKVQEI…DLVAYVEEKS (73 aa). An O-(pantetheine 4'-phosphoryl)serine modification is found at serine 35.

The protein belongs to the acyl carrier protein (ACP) family. In terms of processing, 4'-phosphopantetheine is transferred from CoA to a specific serine of apo-ACP by AcpS. This modification is essential for activity because fatty acids are bound in thioester linkage to the sulfhydryl of the prosthetic group.

The protein resides in the cytoplasm. It functions in the pathway lipid metabolism; fatty acid biosynthesis. Carrier of the growing fatty acid chain in fatty acid biosynthesis. In Streptococcus pyogenes serotype M1, this protein is Acyl carrier protein.